Consider the following 538-residue polypeptide: Sucrose transport protein SUT1 (538 aa).

The Cytoplasmic portion of the chain corresponds to 1–52; sequence MARGSGAGGGGGGGGGGLELSVGVGGGGGARGGGGGEAAAAVETAAPISLGR. Residues 53-73 traverse the membrane as a helical segment; sequence LILSGMVAGGVQYGWALQLSL. Residues 74–81 are Extracellular-facing; sequence LTPYVQTL. The helical transmembrane segment at 82–102 threads the bilayer; that stretch reads GLSHALTSFMWLCGPIAGMVV. At 103–123 the chain is on the cytoplasmic side; that stretch reads QPCVGLYSDRCTSKWGRRRPY. The helical transmembrane segment at 124 to 144 threads the bilayer; the sequence is ILTGCVLICLAVVVIGFSADI. Topologically, residues 145-162 are extracellular; it reads GYAMGDTKEDCSVYHGSR. A helical transmembrane segment spans residues 163–183; it reads WHAAIVYVLGFWLLDFSNNTV. The Cytoplasmic segment spans residues 184–198; that stretch reads QGPARALMADLSGRH. The chain crosses the membrane as a helical span at residues 199 to 219; it reads GPGTANSIFCSWMAMGNILGY. At 220–247 the chain is on the extracellular side; that stretch reads SSGSTNNWHKWFPFLKTRACCEACANLK. Residues 248–268 form a helical membrane-spanning segment; it reads GAFLVAVIFLSLCLVITLIFA. The Cytoplasmic portion of the chain corresponds to 269–306; the sequence is KEVPFKGNAALPTKSNEPAEPEGTGPLAVLKGFRNLPT. Residues 307–327 form a helical membrane-spanning segment; it reads GMPSVLIVTGLTWLSWFPFIL. Topologically, residues 328–357 are extracellular; the sequence is YDTDWMGREIYHGDPKGTDPQIEAFNQGVR. The chain crosses the membrane as a helical span at residues 358–378; it reads AGAFGLLLNSIVLGFSSFLIE. Residues 379 to 388 lie on the Cytoplasmic side of the membrane; the sequence is PMCRKVGPRV. The helical transmembrane segment at 389 to 409 threads the bilayer; the sequence is VWVTSNFLVCIAMAATALISF. At 410-433 the chain is on the extracellular side; the sequence is WSLKDFHGTVQKAITADKSIKAVC. The helical transmembrane segment at 434–454 threads the bilayer; it reads LVLFAFLGVPLAVLYSVPFAV. Residues 455 to 470 lie on the Cytoplasmic side of the membrane; that stretch reads TAQLAATRGGGQGLCT. A helical membrane pass occupies residues 471–491; that stretch reads GVLNISIVIPQVVIALGAGPW. The Extracellular portion of the chain corresponds to 492–499; the sequence is DELFGKGN. A helical membrane pass occupies residues 500–520; it reads IPAFGLASGFALIGGVAGIFL. Over 521–538 the chain is Cytoplasmic; that stretch reads LPKISKRQFRSVSMGGGH.

The protein belongs to the glycoside-pentoside-hexuronide (GPH) cation symporter transporter (TC 2.A.2.4) family. Homodimer.

The protein localises to the cell membrane. It functions in the pathway glycan biosynthesis; sucrose metabolism. Responsible for the transport of sucrose into the cell, with the concomitant uptake of protons (symport system). May also transport other glucosides. May be required for apoplastic phloem sucrose loading in source tissues (e.g. leaves) in order to transport it to sink tissues (e.g. roots, flowers). The protein is Sucrose transport protein SUT1 (SUT1) of Oryza sativa subsp. indica (Rice).